The following is a 567-amino-acid chain: Urease subunit alpha (567 aa).

Residues 129–567 (GGVDTHIHWI…LPMAQRYFLF (439 aa)) enclose the Urease domain. 3 residues coordinate Ni(2+): histidine 134, histidine 136, and lysine 217. The residue at position 217 (lysine 217) is an N6-carboxylysine. Histidine 219 serves as a coordination point for substrate. Ni(2+) is bound by residues histidine 246 and histidine 272. Catalysis depends on histidine 320, which acts as the Proton donor. Aspartate 360 contributes to the Ni(2+) binding site.

This sequence belongs to the metallo-dependent hydrolases superfamily. Urease alpha subunit family. As to quaternary structure, heterotrimer of UreA (gamma), UreB (beta) and UreC (alpha) subunits. Three heterotrimers associate to form the active enzyme. The cofactor is Ni cation. Carboxylation allows a single lysine to coordinate two nickel ions.

Its subcellular location is the cytoplasm. It carries out the reaction urea + 2 H2O + H(+) = hydrogencarbonate + 2 NH4(+). It participates in nitrogen metabolism; urea degradation; CO(2) and NH(3) from urea (urease route): step 1/1. The polypeptide is Urease subunit alpha (Citrobacter koseri (strain ATCC BAA-895 / CDC 4225-83 / SGSC4696)).